The chain runs to 765 residues: Single-minded homolog 1 (765 aa).

The 53-residue stretch at 1-53 (MKEKSKNAARTRREKENSEFYELAKLLPLPSAITSQLDKASIIRLTTSYLKMR) folds into the bHLH domain. PAS domains are found at residues 77-147 (GREL…QPYH) and 218-288 (PPSA…LVKG). The region spanning 292 to 335 (TKYYRFLAKQGGWVWVQSYATIVHNSRSSRPHCIVSVNYVLTDT) is the PAC domain. Residues 336–765 (EYKGLQLSLD…GTSVIITNGS (430 aa)) form the Single-minded C-terminal domain. Low complexity-rich tracts occupy residues 352 to 365 (PTFSYTSSSTPTIS) and 373 to 385 (SRLSSSKSKSRTS). Disordered stretches follow at residues 352–428 (PTFS…PGSQ) and 527–560 (WDEDSVVSSPDPGSASESGDRYRTEQYQNSPHEP). Positions 368-387 (RKGAKSRLSSSKSKSRTSPY) match the Nuclear localization signal motif. A compositionally biased stretch (basic and acidic residues) spans 394–404 (HTERSESDHDS).

In terms of assembly, efficient DNA binding requires dimerization with another bHLH protein. Heterodimer; forms a heterodimer with ARNT, ARNT2. In terms of tissue distribution, detected in lung, skeletal muscle and kidney. During fetal development it is found in the CNS, developing kidney, mesodermal and endodermal tissues, including developing somites, mesonephric duct, and foregut.

The protein localises to the nucleus. In terms of biological role, transcriptional factor that may have pleiotropic effects during embryogenesis and in the adult. In Mus musculus (Mouse), this protein is Single-minded homolog 1 (Sim1).